A 106-amino-acid chain; its full sequence is MAPLIPGELLPEPGELELNAGRPVTTLSVANSGDRPVQVGSHFHFAEANAALQFDRTAARGQRLDIPAGTAIRFEPGDSRDVNLIPFAGNRRVIGFNGQINGPLDA.

The protein belongs to the urease beta subunit family. As to quaternary structure, heterotrimer of UreA (gamma), UreB (beta) and UreC (alpha) subunits. Three heterotrimers associate to form the active enzyme.

The protein localises to the cytoplasm. It catalyses the reaction urea + 2 H2O + H(+) = hydrogencarbonate + 2 NH4(+). Its pathway is nitrogen metabolism; urea degradation; CO(2) and NH(3) from urea (urease route): step 1/1. The chain is Urease subunit beta from Parasynechococcus marenigrum (strain WH8102).